The following is a 405-amino-acid chain: Argininosuccinate synthase (405 aa).

ATP-binding positions include 10 to 18 and alanine 37; that span reads AYSGGLDTS. Residues tyrosine 88 and serine 93 each contribute to the L-citrulline site. Residue glycine 118 coordinates ATP. L-aspartate-binding residues include threonine 120, asparagine 124, and aspartate 125. Asparagine 124 is a binding site for L-citrulline. L-citrulline-binding residues include arginine 128, serine 179, serine 188, glutamate 264, and tyrosine 276.

The protein belongs to the argininosuccinate synthase family. Type 1 subfamily. In terms of assembly, homotetramer.

The protein localises to the cytoplasm. It catalyses the reaction L-citrulline + L-aspartate + ATP = 2-(N(omega)-L-arginino)succinate + AMP + diphosphate + H(+). It functions in the pathway amino-acid biosynthesis; L-arginine biosynthesis; L-arginine from L-ornithine and carbamoyl phosphate: step 2/3. This is Argininosuccinate synthase from Pseudomonas fluorescens (strain Pf0-1).